The chain runs to 145 residues: uncharacterized protein (145 aa).

It is found in the mitochondrion. This is an uncharacterized protein from Arabidopsis thaliana (Mouse-ear cress).